A 308-amino-acid polypeptide reads, in one-letter code: Mitochondrial import receptor subunit TOM40B (308 aa).

The disordered stretch occupies residues 1–29 (MGNTLGLAPMGTLPRRSHRREEPLPNPGS). The tract at residues 281-308 (PLPVTLALGAFLNHWRNRFHCGFSITVG) is required for mitochondrial targeting.

Belongs to the Tom40 family. As to quaternary structure, forms part of the preprotein translocase of the outer mitochondrial membrane (TOM complex) containing TOMM22, TOMM40, TOMM40L and TOMM70. Interacts with mitochondrial targeting sequences.

Its subcellular location is the mitochondrion outer membrane. Functionally, potential channel-forming protein implicated in import of protein precursors into mitochondria. This is Mitochondrial import receptor subunit TOM40B (Tomm40l) from Mus musculus (Mouse).